We begin with the raw amino-acid sequence, 250 residues long: Probable transcriptional regulatory protein Mkms_2298 (250 aa).

Belongs to the TACO1 family.

It is found in the cytoplasm. The sequence is that of Probable transcriptional regulatory protein Mkms_2298 from Mycobacterium sp. (strain KMS).